A 242-amino-acid chain; its full sequence is N-alpha-acetyltransferase 60 (242 aa).

At 1 to 192 (MSEEERPAAL…GGHPPWTVMD (192 aa)) the chain is on the cytoplasmic side. In terms of domain architecture, N-acetyltransferase spans 13–182 (TILRFLCHDD…DAYTYVLYLN (170 aa)). Tyr-38 serves as a coordination point for substrate. Tyr-97 is a catalytic residue. Leu-99 lines the substrate pocket. Acetyl-CoA-binding positions include 101-103 (LGV) and 109-114 (KQGIGS). His-138 is an active-site residue. Acetyl-CoA contacts are provided by residues Asn-143 and 150-153 (YENR). The interval 162–173 (PYYYSIRGVLQD) is required for homodimerization. Tyr-165 is a substrate binding site. The helical intramembrane region spans 193-236 (YLQHLGSALAGFSPCTLPQRIYRQAHTLLRSLLPWSSISAKSGI). Topologically, residues 237-242 (EYSRTM) are cytoplasmic.

This sequence belongs to the acetyltransferase family. NAA60 subfamily. Monomer and homodimer; monomer in presence of substrate and homodimer in its absence.

The protein resides in the golgi apparatus membrane. The enzyme catalyses N-terminal L-methionyl-[transmembrane protein] + acetyl-CoA = N-terminal N(alpha)-acetyl-L-methionyl-[transmembrane protein] + CoA + H(+). It carries out the reaction L-lysyl-[protein] + acetyl-CoA = N(6)-acetyl-L-lysyl-[protein] + CoA + H(+). Functionally, N-alpha-acetyltransferase that specifically mediates the acetylation of N-terminal residues of the transmembrane proteins, with a strong preference for N-termini facing the cytosol. Displays N-terminal acetyltransferase activity towards a range of N-terminal sequences including those starting with Met-Lys, Met-Val, Met-Ala and Met-Met. Required for normal chromosomal segregation during anaphase. May also show histone acetyltransferase activity; such results are however unclear in vivo and would require additional experimental evidences. The polypeptide is N-alpha-acetyltransferase 60 (naa60) (Xenopus tropicalis (Western clawed frog)).